A 339-amino-acid chain; its full sequence is Agamous-like MADS-box protein AGL86 (339 aa).

In terms of domain architecture, MADS-box spans 1–60; that stretch reads MRSKIKLSLIANKTSRRTTFRKRKGGITNKLHELTTLCGVKACAVISSPYENPVVWPSTE. Residues 86–112 are a coiled coil; it reads TYLQDKITKETKKLESLRRENRESQLR.

As to quaternary structure, interacts with AGL61/DIANA and AGL62.

Its subcellular location is the nucleus. Its function is as follows. Probable transcription factor. The polypeptide is Agamous-like MADS-box protein AGL86 (AGL86) (Arabidopsis thaliana (Mouse-ear cress)).